The chain runs to 333 residues: uncharacterized protein (333 aa).

The protein to E.coli YfeH.

This is an uncharacterized protein from Pseudomonas aeruginosa (strain ATCC 15692 / DSM 22644 / CIP 104116 / JCM 14847 / LMG 12228 / 1C / PRS 101 / PAO1).